We begin with the raw amino-acid sequence, 311 residues long: tRNA dimethylallyltransferase (311 aa).

13–20 contributes to the ATP binding site; it reads GPTASGKT. 15–20 contacts substrate; that stretch reads TASGKT. Interaction with substrate tRNA regions lie at residues 38-41 and 166-170; these read DSMQ and QRVLR.

This sequence belongs to the IPP transferase family. In terms of assembly, monomer. Mg(2+) is required as a cofactor.

It carries out the reaction adenosine(37) in tRNA + dimethylallyl diphosphate = N(6)-dimethylallyladenosine(37) in tRNA + diphosphate. In terms of biological role, catalyzes the transfer of a dimethylallyl group onto the adenine at position 37 in tRNAs that read codons beginning with uridine, leading to the formation of N6-(dimethylallyl)adenosine (i(6)A). The chain is tRNA dimethylallyltransferase from Staphylococcus aureus (strain Mu3 / ATCC 700698).